The sequence spans 120 residues: Large ribosomal subunit protein eL18 (120 aa).

This sequence belongs to the eukaryotic ribosomal protein eL18 family.

This is Large ribosomal subunit protein eL18 from Methanococcus maripaludis (strain DSM 14266 / JCM 13030 / NBRC 101832 / S2 / LL).